Reading from the N-terminus, the 776-residue chain is Cullin-1 (776 aa).

Arginine 63 bears the Omega-N-methylarginine mark. In terms of domain architecture, Cullin neddylation spans 706–766 (DRKLLIQAAI…IEKEYLERVD (61 aa)). Lysine 720 is covalently cross-linked (Glycyl lysine isopeptide (Lys-Gly) (interchain with G-Cter in NEDD8)).

It belongs to the cullin family. In terms of assembly, component of multiple Cul1-RING E3 ubiquitin-protein ligase complexes commonly known as SCF (SKP1-CUL1-F-box) complexes, consisting of CUL1, SKP1, RBX1 and a variable F-box domain-containing protein as substrate-specific subunit. Component of the SCF(FBXW11) complex containing FBXW11. Component of the SCF(SKP2) complex containing SKP2, in which it interacts directly with SKP1, SKP2 and RBX1. Component of the SCF(FBXW2) complex containing FBXW2. Component of the SCF(FBXO32) complex containing FBXO32. Component of the probable SCF(FBXO7) complex containing FBXO7. Component of the SCF(FBXO10) complex containing FBXO10. Component of the SCF(FBXO11) complex containing FBXO11. Component of the SCF(FBXO25) complex containing FBXO25. Component of the SCF(FBXO33) complex containing FBXO33. Component of the probable SCF(FBXO4) complex containing FBXO4. Component of the SCF(FBXO44) complex, composed of SKP1, CUL1 and FBXO44. Component of the SCF(BTRC) complex, composed of SKP1, CUL1 and BTRC. This complex binds phosphorylated NFKBIA. Part of a SCF complex consisting of CUL1, RBX1, SKP1 and FBXO2. Component of a SCF(SKP2)-like complex containing CUL1, SKP1, TRIM21 and SKP2. Component of the SCF(FBXO17) complex, composed of SKP1, CUL1 and FBXO17. Component of the SCF(FBXO27) complex, composed of SKP1, CUL1 and FBXO27. Component of the SCF(CCNF) complex consisting of CUL1, RBX1, SKP1 and CCNF. Interacts with CCNF. Component of the SCF(FBXL3) complex composed of CUL1, SKP1, RBX1 and FBXL3. Component of the SCF(FBXL21) complex composed of CUL1, SKP1, RBX1 and FBXL21. Component of the SCF(FBXO9) composed of CUL1, SKP1, RBX1 and FBXO9. Component of the SCF(FBXW7) composed of CUL1, SKP1, RBX1 and FBXW7. Component of the SCF(FBXO31) complex composed of CUL1, SKP1, RBX1 and FBXO31. Interacts with CHEK2; mediates CHEK2 ubiquitination and regulates its function. Part of a complex with TIP120A/CAND1 and RBX1. The unneddylated form interacts with TIP120A/CAND1 and the interaction mediates the exchange of the F-box substrate-specific subunit. Can self-associate. Interacts with FBXW8. Interacts with RNF7. Interacts with TRIM21. Interacts with COPS2. Interacts with DCUN1D1 and UBE2M. Interacts with DCUN1D3. Interacts with DCUN1D4. Identified in a complex with RBX1 and GLMN. Interacts with CEP68 as part of the SCF(FBXW11) complex; the interaction is probably mediated by FBXW11 and the complex also contains CDK5RAP2 and PCNT. Interacts (when neddylated) with ARIH1; leading to activate the E3 ligase activity of ARIH1. Interacts with COPS9. Interacts with UBXN1. Interacts with KAT7, probably as part of an SCF complex; the interaction mediates KAT7 ubiquitination. Interacts with NOTCH2. Part of a complex that contains DCUN1D5, CUL1 and RBX1; this interaction is bridged by CUL1. Interacts (unneddylated form) with DCUN1D1, DCUN1D2, DCUN1D3, DCUN1D4 and DCUN1D5; these interactions promote the cullin neddylation. Interacts (via the C-terminal domain) with CUL7; the interaction seems to be mediated by FBXW8; it is likely specific to FBXW8, but not other F-box proteins. Interacts with UBR2, as part of SCF(BTRC) complex; the interaction mediates 'Lys-48'-linked ubiquitination of UBR2 and is regulated by DUSP22 in the T-cell receptor signaling pathway. As to quaternary structure, (Microbial infection) Interacts with murine cytomegalovirus M48. In terms of processing, neddylated; which enhances the ubiquitination activity of SCF. Neddylation prevents binding of the inhibitor CAND1. Neddylation leads to structural rearrangment in the complex that allows interaction between the E2 ubiquitin-conjugating enzyme and the acceptor ubiquitin. Deneddylated via its interaction with the COP9 signalosome (CSN) complex. (Microbial infection) Deneddylated by murine cytomegalovirus M48 leading to a S-phase-like environment that is required for efficient replication of the viral genome. As to expression, embryo fibroblasts and embryo preadipocytes.

It functions in the pathway protein modification; protein ubiquitination. Functionally, core component of multiple cullin-RING-based SCF (SKP1-CUL1-F-box protein) E3 ubiquitin-protein ligase complexes, which mediate the ubiquitination of proteins involved in cell cycle progression, signal transduction and transcription. SCF complexes and ARIH1 collaborate in tandem to mediate ubiquitination of target proteins. In the SCF complex, serves as a rigid scaffold that organizes the SKP1-F-box protein and RBX1 subunits. May contribute to catalysis through positioning of the substrate and the ubiquitin-conjugating enzyme. The E3 ubiquitin-protein ligase activity of the complex is dependent on the neddylation of the cullin subunit and exchange of the substrate recognition component is mediated by TIP120A/CAND1. The functional specificity of the SCF complex depends on the F-box protein as substrate recognition component. SCF(BTRC) and SCF(FBXW11) direct ubiquitination of CTNNB1 and participate in Wnt signaling. SCF(FBXW11) directs ubiquitination of phosphorylated NFKBIA. SCF(BTRC) directs ubiquitination of NFKBIB, NFKBIE, ATF4, SMAD3, SMAD4, CDC25A, FBXO5 and probably NFKB2. SCF(BTRC) and/or SCF(FBXW11) direct ubiquitination of CEP68. SCF(SKP2) directs ubiquitination of phosphorylated CDKN1B/p27kip and is involved in regulation of G1/S transition. SCF(SKP2) directs ubiquitination of ORC1, CDT1, RBL2, ELF4, CDKN1A, RAG2, FOXO1A, and probably MYC and TAL1. SCF(FBXW7) directs ubiquitination of cyclin E, NOTCH1 released notch intracellular domain (NICD), and probably PSEN1. SCF(FBXW2) directs ubiquitination of GCM1. SCF(FBXO32) directs ubiquitination of MYOD1. SCF(FBXO7) directs ubiquitination of BIRC2 and DLGAP5. SCF(FBXO33) directs ubiquitination of YBX1. SCF(FBXO1) directs ubiquitination of BCL6 and DTL but does not seem to direct ubiquitination of TP53. SCF(BTRC) mediates the ubiquitination of NFKBIA at 'Lys-21' and 'Lys-22'; the degradation frees the associated NFKB1-RELA dimer to translocate into the nucleus and to activate transcription. SCF(CCNF) directs ubiquitination of CCP110. SCF(FBXL3) and SCF(FBXL21) direct ubiquitination of CRY1 and CRY2. SCF(FBXO9) directs ubiquitination of TTI1 and TELO2. SCF(FBXO10) directs ubiquitination of BCL2. Neddylated CUL1-RBX1 ubiquitinates p53/TP53 recruited by Cul7-RING(FBXW8) complex. SCF(BTRC) directs 'Lys-48'-linked ubiquitination of UBR2 in the T-cell receptor signaling pathway. The SCF(FBXO31) protein ligase complex specifically mediates the ubiquitination of proteins amidated at their C-terminus in response to oxidative stress. The sequence is that of Cullin-1 (Cul1) from Mus musculus (Mouse).